We begin with the raw amino-acid sequence, 126 residues long: Cystatin-like protein (126 aa).

The Secondary area of contact motif lies at glutamine 72 to glycine 76. A disulfide bridge links cysteine 94 with cysteine 115.

It belongs to the cystatin family.

The protein is Cystatin-like protein (Cys) of Drosophila melanogaster (Fruit fly).